A 199-amino-acid polypeptide reads, in one-letter code: MKVNDMFWFWLILGIIALFIIVKAIVIVNQYEGGLIFRLGRVIGKLKPGINIIIPFLDVPVKVDMRTRVTDIPPQEMITKDNAVVKVDAVVYYRVIDVEKAILEVEDYEYAIINLAQTTLRAIIGSMELDEVLNKREYINSKLLEILDRETDAWGVRIEKVEVKEIDPPEDIKNAMAQQMKAERLKRAAILEAEGEKPE.

A helical transmembrane segment spans residues F7–I27.

Belongs to the band 7/mec-2 family.

Its subcellular location is the membrane. This is an uncharacterized protein from Methanocaldococcus jannaschii (strain ATCC 43067 / DSM 2661 / JAL-1 / JCM 10045 / NBRC 100440) (Methanococcus jannaschii).